A 259-amino-acid chain; its full sequence is Polycomb group RING finger protein 1 (259 aa).

At alanine 2 the chain carries N-acetylalanine. Serine 3 carries the phosphoserine modification. Residue lysine 24 forms a Glycyl lysine isopeptide (Lys-Gly) (interchain with G-Cter in SUMO2) linkage. Residues 47 to 86 form an RING-type zinc finger; sequence CCLCAGYFVDATTITECLHTFCKSCIVKYLQTSKYCPMCN. Residues 86–247 are required for repressor activity; it reads NIKIHETQPL…LSRWFGKPSP (162 aa). A Glycyl lysine isopeptide (Lys-Gly) (interchain with G-Cter in SUMO2) cross-link involves residue lysine 88. Residues 150 to 255 form a required for the interaction with the KDM2B-SKP1 heterodimeric complex region; it reads LPFSSFDHSK…SPLLLQYSVK (106 aa). The interval 167–255 is RING-finger and WD40-associated ubiquitin-like domain (RAWUL); sufficient for interaction with BCOR and BCORL1; that stretch reads EQLNLCLERL…SPLLLQYSVK (89 aa).

Interacts with BCORL1, forming heterodimers. The PCGF1-BCORL1 heterodimeric complex interacts with the KDM2B-SKP1 heterodimeric complex to form a homotetrameric polycomb repression complex 1 (PRC1.1). Component of the repressive BCOR complex containing a Polycomb group subcomplex at least composed of RYBP, RING1 and RNF2/RING2. Specifically interacts with BCOR, RING1 and RNF2/RING2. Component of a PRC1-like complex. Interacts with CBX6, CBX7 and CBX8. Interacts with DPPA4, NANOG, POU5F1 and RYBP. As to expression, ubiquitous.

The protein localises to the nucleus. Its function is as follows. Component of the Polycomb group (PcG) multiprotein BCOR complex, a complex required to maintain the transcriptionally repressive state of some genes, such as BCL6 and the cyclin-dependent kinase inhibitor, CDKN1A. Transcriptional repressor that may be targeted to the DNA by BCL6; this transcription repressor activity may be related to PKC signaling pathway. Represses CDKN1A expression by binding to its promoter, and this repression is dependent on the retinoic acid response element (RARE element). Promotes cell cycle progression and enhances cell proliferation as well. May have a positive role in tumor cell growth by down-regulating CDKN1A. Component of a Polycomb group (PcG) multiprotein PRC1-like complex, a complex class required to maintain the transcriptionally repressive state of many genes, including Hox genes, throughout development. PcG PRC1 complex acts via chromatin remodeling and modification of histones; it mediates monoubiquitination of histone H2A 'Lys-119', rendering chromatin heritably changed in its expressibility. Within the PRC1-like complex, regulates RNF2 ubiquitin ligase activity. Regulates the expression of DPPA4 and NANOG in the NT2 embryonic carcinoma cells. This chain is Polycomb group RING finger protein 1 (PCGF1), found in Homo sapiens (Human).